An 860-amino-acid polypeptide reads, in one-letter code: MQEQYRPEEIESKVQLHWDEKRTFEVTEDESKEKYYCLSMLPYPSGRLHMGHVRNYTIGDVIARYQRMLGKNVLQPIGWDAFGLPAEGAAVKNNTAPAPWTYDNIAYMKNQLKMLGFGYDWSRELATCTPEYYRWEQKFFTELYKKGLVYKKTSAVNWCPNDQTVLANEQVIDGCCWRCDTKVERKEIPQWFIKITAYADELLNDLDKLDHWPDTVKTMQRNWIGRSEGVEITFNVNDYDNTLTVYTTRPDTFMGCTYLAVAAGHPLAQKAAENNPELAAFIDECRNTKVAEAEMATMEKKGVDTGFKAVHPLTGEEIPVWAANFVLMEYGTGAVMAVPGHDQRDYEFASKYGLNIKPVILAADGSEPDLSQQALTEKGVLFNSGEFNGLDHEAAFNAIADKLTAMGVGERKVNYRLRDWGVSRQRYWGAPIPMVTLEDGTVMPTPDDQLPVILPEDVVMDGITSPIKADPEWAKTTINGMPALRETDTFDTFMESSWYYARYTCPQYKEGMLDSEAANYWLPVDIYIGGIEHAIMHLLYFRFFHKLMRDAGMVNSDEPAKQLLCQGMVLADAFYYVGENGERNWVSPVDAIVERDEKGRIVKAKDAAGHELVYTGMSKMSKSKNNGIDPQVMVERYGADTVRLFMMFASPADMTLEWQESGVEGANRFLKRVWKLVYEHTAKGDVAALNVDALTEDQKALRRDVHKTIAKVTDDIGRRQTFNTAIAAIMELMNKLAKAPTDGEQDRALMQEALLAVVRMLNPFTPHICFTLWQELKGEGDIDNAPWPVADEKAMVEDSTLVVVQVNGKVRAKITVPVDATEEQVRERAGQEHLVAKYLDGVTVRKVIYVPGKLLNLVVG.

The short motif at 42–52 is the 'HIGH' region element; sequence PYPSGRLHMGH. Residues 619–623 carry the 'KMSKS' region motif; it reads KMSKS. Residue K622 participates in ATP binding.

It belongs to the class-I aminoacyl-tRNA synthetase family.

The protein localises to the cytoplasm. The catalysed reaction is tRNA(Leu) + L-leucine + ATP = L-leucyl-tRNA(Leu) + AMP + diphosphate. The chain is Leucine--tRNA ligase from Shigella dysenteriae serotype 1 (strain Sd197).